A 929-amino-acid chain; its full sequence is Chitin synthase 1 (929 aa).

Over residues 1-12 (MAYRGAGGPGGG) the composition is skewed to gly residues. Disordered regions lie at residues 1–43 (MAYR…QEDE) and 114–156 (MGGH…GGGL). Polar residues-rich tracts occupy residues 21 to 33 (QDLN…SNVQ) and 140 to 149 (SWVQRQNPNA). A glycan (N-linked (GlcNAc...) asparagine) is linked at Asn560. 5 helical membrane-spanning segments follow: residues 587–607 (FFFH…WFSL), 643–663 (LFNA…FILA), 678–698 (SFFV…YLVV), 730–750 (VILL…FMYL), and 758–778 (SFPY…VYAF). Asn801 carries N-linked (GlcNAc...) asparagine glycosylation. A run of 2 helical transmembrane segments spans residues 857-877 (TMLV…ITSD) and 897-917 (FLLF…LWFL).

The protein belongs to the chitin synthase family. Class III subfamily.

It is found in the cell membrane. It carries out the reaction [(1-&gt;4)-N-acetyl-beta-D-glucosaminyl](n) + UDP-N-acetyl-alpha-D-glucosamine = [(1-&gt;4)-N-acetyl-beta-D-glucosaminyl](n+1) + UDP + H(+). Its function is as follows. Polymerizes chitin, a structural polymer of the cell wall and septum, by transferring the sugar moiety of UDP-GlcNAc to the non-reducing end of the growing chitin polymer. CHS1 and CHS3 have compensatory functions in cell wall modifications in responses to stresses. Involved in appressoria formation and required for full virulence. The protein is Chitin synthase 1 of Pyricularia oryzae (strain 70-15 / ATCC MYA-4617 / FGSC 8958) (Rice blast fungus).